We begin with the raw amino-acid sequence, 124 residues long: Small ribosomal subunit protein uS12 (124 aa).

The protein belongs to the universal ribosomal protein uS12 family. Part of the 30S ribosomal subunit. Contacts proteins S8 and S17. May interact with IF1 in the 30S initiation complex.

Its function is as follows. With S4 and S5 plays an important role in translational accuracy. In terms of biological role, interacts with and stabilizes bases of the 16S rRNA that are involved in tRNA selection in the A site and with the mRNA backbone. Located at the interface of the 30S and 50S subunits, it traverses the body of the 30S subunit contacting proteins on the other side and probably holding the rRNA structure together. The combined cluster of proteins S8, S12 and S17 appears to hold together the shoulder and platform of the 30S subunit. This is Small ribosomal subunit protein uS12 from Photorhabdus laumondii subsp. laumondii (strain DSM 15139 / CIP 105565 / TT01) (Photorhabdus luminescens subsp. laumondii).